The following is a 1455-amino-acid chain: Cleavage and polyadenylation specificity factor subunit 1 (1455 aa).

The protein belongs to the CPSF1 family. Component of the cleavage and polyadenylation specificity factor (CPSF) complex, composed of at least Clp, Cpsf73, Cpsf100 and Cpsf160.

The protein resides in the nucleus. Its function is as follows. Component of the cleavage and polyadenylation specificity factor (CPSF) complex that plays a key role in pre-mRNA 3'-end formation, recognizing the AAUAAA signal sequence and interacting with poly(A) polymerase and other factors to bring about cleavage and poly(A) addition. This subunit is involved in the RNA recognition step of the polyadenylation reaction. The polypeptide is Cleavage and polyadenylation specificity factor subunit 1 (Cpsf160) (Drosophila melanogaster (Fruit fly)).